Consider the following 559-residue polypeptide: Berberine bridge enzyme-like A (559 aa).

The first 21 residues, 1–21 (MFPLIILISFSLASLSETATG), serve as a signal peptide directing secretion. 2 N-linked (GlcNAc...) asparagine glycosylation sites follow: Asn25 and Asn37. Cysteines 29 and 86 form a disulfide. The FAD-binding PCMH-type domain maps to 64–240 (FMPKPTFIIL…YAWKIRLLKV (177 aa)). His101 is modified (pros-8alpha-FAD histidine). N-linked (GlcNAc...) asparagine glycosylation is found at Asn321, Asn355, and Asn494.

This sequence belongs to the oxygen-dependent FAD-linked oxidoreductase family. It depends on FAD as a cofactor. In terms of tissue distribution, mostly expressed in roots.

It localises to the vacuole. It functions in the pathway alkaloid biosynthesis; nicotine biosynthesis. Involved in the biosynthesis of pyridine alkaloid natural products, leading mainly to the production of anabasine, anatabine, nicotine and nornicotine, effective deterrents against herbivores with antiparasitic and pesticide properties (neurotoxins); nornicotine serves as the precursor in the synthesis of the carcinogen compound N'-nitrosonornicotine (NNN). Catalyzes a late oxidation step subsequent to the pyridine ring condensation reaction in the biosynthesis of alkaloids. The polypeptide is Berberine bridge enzyme-like A (Nicotiana tabacum (Common tobacco)).